Reading from the N-terminus, the 404-residue chain is uncharacterized protein (404 aa).

2 helical membrane passes run 35 to 55 (ILFS…FTFL) and 92 to 112 (EDIW…ISSI).

It is found in the membrane. This is an uncharacterized protein from Saccharomyces cerevisiae (strain ATCC 204508 / S288c) (Baker's yeast).